The primary structure comprises 431 residues: Fumarylacetoacetase fahA (431 aa).

Ca(2+) is bound at residue Asp133. Tyr135 is a substrate binding site. His140 acts as the Proton acceptor in catalysis. Substrate is bound at residue Arg149. Residues Glu209, Glu211, and Asp243 each coordinate Ca(2+). A Mg(2+)-binding site is contributed by Asp243. Substrate-binding residues include Gln250 and Tyr254. Mg(2+) contacts are provided by Lys263 and Thr267. Thr362 lines the substrate pocket. Residues 362 to 381 (TISGKENQTQGSLLEQTNGK) are compositionally biased toward polar residues. The interval 362 to 382 (TISGKENQTQGSLLEQTNGKN) is disordered.

The protein belongs to the FAH family. It depends on Ca(2+) as a cofactor. Requires Mg(2+) as cofactor.

The catalysed reaction is 4-fumarylacetoacetate + H2O = acetoacetate + fumarate + H(+). The protein operates within amino-acid degradation; L-phenylalanine degradation; acetoacetate and fumarate from L-phenylalanine: step 6/6. Functionally, fumarylacetoacetase; part of the L-tyrosine degradation gene cluster that mediates the biosynthesis of the brownish pigment pyomelanin as an alternative melanin. The 4-hydroxyphenylpyruvate dioxygenase hppD catalyzes the conversion of 4-hydroxyphenylpyruvate to homogentisic acid (HGA). The protein hmgX is crucial for this conversion and thus, probably functions as an accessory factor to mediate specific activity of hppD. The homogentisate 1,2-dioxygenase hmgA is then involved in the cleavage of the aromatic ring of HGA and its conversion to 4-maleylacetoacetate. When hmgA activity is lowered by the cell wall integrity (CWI) signaling pathway, HGA accumulates and leads to the production of pyomelanin through benzoquinone acetic acid after oxidation and polymerization. On the opposite, in non-stress conditions, both hppD and hmgA activities are balanced and HGA is degraded into 4-maleylacetoacetate. 4-maleylacetoacetate is further converted to 4-fumarylacetoacetate by the maleylacetoacetate isomerase maiA, which is degraded into fumarate and acetoacetate by the fumarylacetoacetase fahA. The polypeptide is Fumarylacetoacetase fahA (Aspergillus fumigatus (strain ATCC MYA-4609 / CBS 101355 / FGSC A1100 / Af293) (Neosartorya fumigata)).